The chain runs to 32 residues: Cytochrome c3, 10 kDa (32 aa).

Heme is bound by residues His-16, Cys-25, Cys-28, and His-29.

As to quaternary structure, monomer. Binds 1 heme group per subunit.

The protein resides in the periplasm. Its function is as follows. Participates in sulfate respiration coupled with phosphorylation by transferring electrons from the enzyme dehydrogenase to ferredoxin. This chain is Cytochrome c3, 10 kDa, found in Desulfuromonas acetoxidans (Chloropseudomonas ethylica).